A 206-amino-acid polypeptide reads, in one-letter code: Acireductone dioxygenase (206 aa).

The Fe(2+) site is built by His102, His104, Glu108, and His146. The Ni(2+) site is built by His102, His104, Glu108, and His146.

This sequence belongs to the acireductone dioxygenase (ARD) family. In terms of assembly, monomer. It depends on Fe(2+) as a cofactor. Ni(2+) is required as a cofactor.

It catalyses the reaction 1,2-dihydroxy-5-(methylsulfanyl)pent-1-en-3-one + O2 = 3-(methylsulfanyl)propanoate + CO + formate + 2 H(+). It carries out the reaction 1,2-dihydroxy-5-(methylsulfanyl)pent-1-en-3-one + O2 = 4-methylsulfanyl-2-oxobutanoate + formate + 2 H(+). It participates in amino-acid biosynthesis; L-methionine biosynthesis via salvage pathway; L-methionine from S-methyl-5-thio-alpha-D-ribose 1-phosphate: step 5/6. Its function is as follows. Catalyzes 2 different reactions between oxygen and the acireductone 1,2-dihydroxy-3-keto-5-methylthiopentene (DHK-MTPene) depending upon the metal bound in the active site. Fe-containing acireductone dioxygenase (Fe-ARD) produces formate and 2-keto-4-methylthiobutyrate (KMTB), the alpha-ketoacid precursor of methionine in the methionine recycle pathway. Ni-containing acireductone dioxygenase (Ni-ARD) produces methylthiopropionate, carbon monoxide and formate, and does not lie on the methionine recycle pathway. In Frankia alni (strain DSM 45986 / CECT 9034 / ACN14a), this protein is Acireductone dioxygenase.